The primary structure comprises 149 residues: Large ribosomal subunit protein eL24A (149 aa).

Composition is skewed to basic and acidic residues over residues 93–102 and 116–125; these read KRNQRPEVRA and KAASESEKKA. Residues 93–149 form a disordered region; that stretch reads KRNQRPEVRAAARAAALKQRKDKKAASESEKKAIKAKSAASSARGQAIKNAKAAARH.

It belongs to the eukaryotic ribosomal protein eL24 family. In terms of assembly, component of the large ribosomal subunit (LSU). Mature yeast ribosomes consist of a small (40S) and a large (60S) subunit. The 40S small subunit contains 1 molecule of ribosomal RNA (18S rRNA) and at least 33 different proteins. The large 60S subunit contains 3 rRNA molecules (25S, 5.8S and 5S rRNA) and at least 46 different proteins.

The protein localises to the cytoplasm. Component of the ribosome, a large ribonucleoprotein complex responsible for the synthesis of proteins in the cell. The small ribosomal subunit (SSU) binds messenger RNAs (mRNAs) and translates the encoded message by selecting cognate aminoacyl-transfer RNA (tRNA) molecules. The large subunit (LSU) contains the ribosomal catalytic site termed the peptidyl transferase center (PTC), which catalyzes the formation of peptide bonds, thereby polymerizing the amino acids delivered by tRNAs into a polypeptide chain. The nascent polypeptides leave the ribosome through a tunnel in the LSU and interact with protein factors that function in enzymatic processing, targeting, and the membrane insertion of nascent chains at the exit of the ribosomal tunnel. The polypeptide is Large ribosomal subunit protein eL24A (rpl2401) (Schizosaccharomyces pombe (strain 972 / ATCC 24843) (Fission yeast)).